Consider the following 177-residue polypeptide: GTP-dependent dephospho-CoA kinase (177 aa).

Positions 48, 49, 50, 67, 69, and 124 each coordinate GTP.

The protein belongs to the GTP-dependent DPCK family.

It catalyses the reaction 3'-dephospho-CoA + GTP = GDP + CoA + H(+). Its pathway is cofactor biosynthesis; coenzyme A biosynthesis. Its function is as follows. Catalyzes the GTP-dependent phosphorylation of the 3'-hydroxyl group of dephosphocoenzyme A to form coenzyme A (CoA). This Pyrococcus furiosus (strain ATCC 43587 / DSM 3638 / JCM 8422 / Vc1) protein is GTP-dependent dephospho-CoA kinase.